A 417-amino-acid chain; its full sequence is Origin of replication complex subunit 4 (417 aa).

Residue 59-66 (GPRGSGKA) participates in ATP binding.

Belongs to the ORC4 family. In terms of assembly, component of the origin recognition complex (ORC) composed of at least ORC1 (ORC1A or ORC1B), ORC2, ORC3, ORC4, ORC5 and ORC6. ORC is regulated in a cell-cycle and development dependent manner. It is sequentially assembled at the exit from anaphase of mitosis and disassembled as cells enter S phase. Interacts directly with ORC1A, ORC2, ORC3, ORC5 and ORC6. In terms of tissue distribution, follow a cell-cycle regulation with a peak at the G1/S-phase. Isoform AtORC4a is expressed at low levels ubiquitously. Isoform AtORC4b is mostly expressed in siliques, flowers and flower buds, and, to a lower exent, in roots, leaves and stems.

It localises to the nucleus. Component of the origin recognition complex (ORC) that binds origins of replication. DNA-binding is ATP-dependent. The specific DNA sequences that define origins of replication have not been identified yet. ORC is required to assemble the pre-replication complex necessary to initiate DNA replication. This Arabidopsis thaliana (Mouse-ear cress) protein is Origin of replication complex subunit 4.